A 306-amino-acid chain; its full sequence is Oxygen-dependent coproporphyrinogen-III oxidase (306 aa).

Ser-94 serves as a coordination point for substrate. His-98 and His-108 together coordinate a divalent metal cation. The active-site Proton donor is His-108. Substrate is bound at residue 110-112 (NVR). 2 residues coordinate a divalent metal cation: His-147 and His-177. The important for dimerization stretch occupies residues 242–277 (YVEFNLVYDRGTLFGLQTGGRTESILMSMPPLVRWE). 260-262 (GGR) provides a ligand contact to substrate.

It belongs to the aerobic coproporphyrinogen-III oxidase family. Homodimer. A divalent metal cation serves as cofactor.

The protein resides in the cytoplasm. It catalyses the reaction coproporphyrinogen III + O2 + 2 H(+) = protoporphyrinogen IX + 2 CO2 + 2 H2O. It functions in the pathway porphyrin-containing compound metabolism; protoporphyrin-IX biosynthesis; protoporphyrinogen-IX from coproporphyrinogen-III (O2 route): step 1/1. In terms of biological role, involved in the heme biosynthesis. Catalyzes the aerobic oxidative decarboxylation of propionate groups of rings A and B of coproporphyrinogen-III to yield the vinyl groups in protoporphyrinogen-IX. The sequence is that of Oxygen-dependent coproporphyrinogen-III oxidase from Shewanella woodyi (strain ATCC 51908 / MS32).